The primary structure comprises 368 residues: NAD(P)H-quinone oxidoreductase subunit 1, chloroplastic (368 aa).

Helical transmembrane passes span 27 to 47, 97 to 117, 130 to 150, 269 to 289, 308 to 328, and 348 to 368; these read FIWIAFSILILLLTITIGVLV, WLFNIGPAIVVIPVFLSYLVI, IGVFFWIAISSIVPLGLLMAG, SSLFVTILYLGGWHFSIPFLL, IIIGIIIVLIKSYLFSFIAIM, and FLLPIALGNLLLTASFQAFLL.

Belongs to the complex I subunit 1 family. As to quaternary structure, NDH is composed of at least 16 different subunits, 5 of which are encoded in the nucleus.

It is found in the plastid. Its subcellular location is the chloroplast thylakoid membrane. It catalyses the reaction a plastoquinone + NADH + (n+1) H(+)(in) = a plastoquinol + NAD(+) + n H(+)(out). The enzyme catalyses a plastoquinone + NADPH + (n+1) H(+)(in) = a plastoquinol + NADP(+) + n H(+)(out). Its function is as follows. NDH shuttles electrons from NAD(P)H:plastoquinone, via FMN and iron-sulfur (Fe-S) centers, to quinones in the photosynthetic chain and possibly in a chloroplast respiratory chain. The immediate electron acceptor for the enzyme in this species is believed to be plastoquinone. Couples the redox reaction to proton translocation, and thus conserves the redox energy in a proton gradient. This chain is NAD(P)H-quinone oxidoreductase subunit 1, chloroplastic, found in Physcomitrium patens (Spreading-leaved earth moss).